The sequence spans 160 residues: NADH-quinone oxidoreductase subunit B (160 aa).

The [4Fe-4S] cluster site is built by Cys-37, Cys-38, Cys-102, and Cys-132.

It belongs to the complex I 20 kDa subunit family. As to quaternary structure, NDH-1 is composed of 14 different subunits. Subunits NuoB, C, D, E, F, and G constitute the peripheral sector of the complex. [4Fe-4S] cluster is required as a cofactor.

It localises to the cell inner membrane. It catalyses the reaction a quinone + NADH + 5 H(+)(in) = a quinol + NAD(+) + 4 H(+)(out). NDH-1 shuttles electrons from NADH, via FMN and iron-sulfur (Fe-S) centers, to quinones in the respiratory chain. Couples the redox reaction to proton translocation (for every two electrons transferred, four hydrogen ions are translocated across the cytoplasmic membrane), and thus conserves the redox energy in a proton gradient. The sequence is that of NADH-quinone oxidoreductase subunit B from Neisseria meningitidis serogroup A / serotype 4A (strain DSM 15465 / Z2491).